A 473-amino-acid chain; its full sequence is ATP synthase subunit beta, chloroplastic (473 aa).

172–179 is an ATP binding site; it reads GGAGVGKT.

Belongs to the ATPase alpha/beta chains family. In terms of assembly, F-type ATPases have 2 components, CF(1) - the catalytic core - and CF(0) - the membrane proton channel. CF(1) has five subunits: alpha(3), beta(3), gamma(1), delta(1), epsilon(1). CF(0) has four main subunits: a(1), b(1), b'(1) and c(9-12).

Its subcellular location is the plastid. It localises to the chloroplast thylakoid membrane. The catalysed reaction is ATP + H2O + 4 H(+)(in) = ADP + phosphate + 5 H(+)(out). In terms of biological role, produces ATP from ADP in the presence of a proton gradient across the membrane. The catalytic sites are hosted primarily by the beta subunits. This chain is ATP synthase subunit beta, chloroplastic, found in Equisetum arvense (Field horsetail).